Consider the following 439-residue polypeptide: Secreted aspartic protease LUC8 (439 aa).

A signal peptide spans 1 to 20 (MMHAFHHLAVLLIGSLPASA). Residues N33 and N54 are each glycosylated (N-linked (GlcNAc...) asparagine). Residues 51-435 (YLFNITVGTP…DFETQSFGLA (385 aa)) form the Peptidase A1 domain. D69 is a catalytic residue. N110, N126, N179, and N289 each carry an N-linked (GlcNAc...) asparagine glycan. The active site involves D300. N-linked (GlcNAc...) asparagine glycans are attached at residues N329 and N373. Cysteines 355 and 391 form a disulfide.

It belongs to the peptidase A1 family.

The protein resides in the secreted. Its function is as follows. Secreted aspartic protease; part of the gene cluster that mediates the biosynthesis of the mycotoxin lucilactaene and the lucilactaene-related compound NG-391 that act as cell cycle inhibitors with potent growth inhibitory activity against malarial parasites, moderate growth inhibitory activity against cancer cells, and no activity against bacteria and fungi. Within the cluster, LUC7 and LUC8 encode proteins which are not commonly involved in the biosynthesis of secondary metabolites and are not essential for lucilactaene biosynthesis. The protein is Secreted aspartic protease LUC8 of Fusarium sp.